The following is a 235-amino-acid chain: Small ribosomal subunit protein uS2 (235 aa).

This sequence belongs to the universal ribosomal protein uS2 family.

The polypeptide is Small ribosomal subunit protein uS2 (Caldanaerobacter subterraneus subsp. tengcongensis (strain DSM 15242 / JCM 11007 / NBRC 100824 / MB4) (Thermoanaerobacter tengcongensis)).